The following is a 539-amino-acid chain: Chaperonin GroEL (539 aa).

ATP contacts are provided by residues 29–32 (TLGP), 86–90 (DGTTT), glycine 413, 479–481 (DAL), and aspartate 495.

This sequence belongs to the chaperonin (HSP60) family. In terms of assembly, forms a cylinder of 14 subunits composed of two heptameric rings stacked back-to-back. Interacts with the co-chaperonin GroES.

It is found in the cytoplasm. The catalysed reaction is ATP + H2O + a folded polypeptide = ADP + phosphate + an unfolded polypeptide.. Functionally, together with its co-chaperonin GroES, plays an essential role in assisting protein folding. The GroEL-GroES system forms a nano-cage that allows encapsulation of the non-native substrate proteins and provides a physical environment optimized to promote and accelerate protein folding. This Thermosipho africanus (strain TCF52B) protein is Chaperonin GroEL.